The sequence spans 1486 residues: MIERGKFRSLTLINWNGFFARTFDLDELVTTLSGGNGAGKSTTMAAFVTALIPDLTLLHFRNTTEAGATSGSRDKGLHGKLKAGVCYSMLDTINSRHQRVVVGVRLQQVAGRDRKVDIKPFAIQGLPMSVQPTQLVTETLNERQARVLPLNELKDKLEAMEGVQFKQFNSITDYHSLMFDLGIIARRLRSASDRSKFYRLIEASLYGGISSAITRSLRDYLLPENSGVRKAFQDMEAALRENRMTLEAIRVTQSDRDLFKHLISEATNYVAADYMRHANERRVHLDKALEFRRELHTSRKQLAAEQYKHVDMARELAEHNGAEGDLEADYQAASDHLNLVQTALRQQEKIERYEADLDELQIRLEEQNEVVAEAIERQEENEARAEAAELEVDELKSQLADYQQALDVQQTRAIQYNQAIAALNRAKELCHLPDLTADSAAEWLETFQAKELEATEKMLSLEQKMSMAQTAHSQFEQAYQLVVAINGPLARNEAWDVARELLREGVDQRHLAEQVQPLRMRLSELEQRLREQQEAERLLADFCKRQGKNFDIDELEALHQELEARIASLSDSVSNAREERMALRQEQEQLQSRIQSLMQRAPVWLAAQNSLNQLSEQCGEEFTSSQDVTEFLQQLLEREREAIVERDEVGARKNAVDEEIERLSQPGGSEDQRLNALAERFGGVLLSEIYDDVSLEDAPYFSALYGPSRHAIVVPDLSQVTEHLEGLTDCPEDLYLIEGDPQSFDDSVFSVDELEKAVVVKIADRQWRYSRFPEVPLFGRAARESRIESLHAEREVLSERFATLSFDVQKTQRLHQAFSRFIGSHLAVAFESDPEAEIRQLNSRRVELERALSNHENDNQQQRIQFEQAKEGVTALNRILPRLNLLADDSLADRVDEIRERLDEAQEAARFVQQFGNQLAKLEPIVSVLQSDPEQFEQLKEDYAYSQQMQRDARQQAFALTEVVQRRAHFSYSDSAEMLSGNSDLNEKLRERLEQAEAERTRAREALRGHAAQLNQYNQVLASLKSSYDTKKELLNDLQRELQDIGVRADSGAEERARIRRDELHAQLSNNRSRRNQLEKALTFCEAEMDNLTRKLRKLERDYFEMREQVVTAKAGWCAVMRMVKDNGVERRLHRRELAYLSADDLRSMSDKALGALRLAVADNEHLRDVLRMSEDPKRPERKIQFFVAVYQHLRERIRQDIIRTDDPVEAIEQMEIELSRLTEELTSREQKLAISSRSVANIIRKTIQREQNRIRMLNQGLQNVSFGQVNSVRLNVNVRETHAMLLDVLSEQHEQHQDLFNSNRLTFSEALAKLYQRLNPQIDMGQRTPQTIGEELLDYRNYLEMEVEVNRGSDGWLRAESGALSTGEAIGTGMSILVMVVQSWEDESRRLRGKDISPCRLLFLDEAARLDARSIATLFELCERLQMQLIIAAPENISPEKGTTYKLVRKVFQNTEHVHVVGLRGFAPQLPETLPGSDEAPSQAS.

An ATP-binding site is contributed by 34–41 (GGNGAGKS). 3 coiled-coil regions span residues 326–418 (LEAD…QYNQ), 444–480 (LETF…QAYQ), and 509–603 (RHLA…RAPV). Residues 666-783 (PGGSEDQRLN…EVPLFGRAAR (118 aa)) are flexible hinge. Coiled coils occupy residues 835–923 (EAEI…AKLE), 977–1115 (EMLS…TAKA), and 1209–1266 (VEAI…QNVS).

The protein belongs to the SMC family. MukB subfamily. In terms of assembly, homodimerization via its hinge domain. Binds to DNA via its C-terminal region. Interacts, and probably forms a ternary complex, with MukE and MukF via its C-terminal region. The complex formation is stimulated by calcium or magnesium. Interacts with tubulin-related protein FtsZ.

It localises to the cytoplasm. The protein localises to the nucleoid. Its function is as follows. Plays a central role in chromosome condensation, segregation and cell cycle progression. Functions as a homodimer, which is essential for chromosome partition. Involved in negative DNA supercoiling in vivo, and by this means organize and compact chromosomes. May achieve or facilitate chromosome segregation by condensation DNA from both sides of a centrally located replisome during cell division. The protein is Chromosome partition protein MukB of Escherichia coli O6:K15:H31 (strain 536 / UPEC).